Here is a 518-residue protein sequence, read N- to C-terminus: Protein FAM98A (518 aa).

2 disordered regions span residues 300 to 415 (GRVP…GHSS) and 434 to 518 (GSGY…HYTS). Residues 302-311 (VPDRGGRPNE) show a composition bias toward basic and acidic residues. Gly residues-rich tracts occupy residues 349–364 (GGRG…GGRG), 383–396 (WTDG…GYQD), and 405–415 (QPGGYHGGHSS). Basic and acidic residues predominate over residues 447 to 459 (RYQDGGHHGDRGG). Gly residues predominate over residues 460-484 (GRGGRGGRGGRGGRAGQGGGWGGRG). Residues 488 to 504 (YHQGGQFEQHFQHGGYQ) are compositionally biased toward low complexity. The segment covering 505 to 518 (YNHSGFGQGRHYTS) has biased composition (polar residues).

This sequence belongs to the FAM98 family. Interacts (via N- and C-terminus) with DDX1. Interacts (via N- and C-terminus) with C14orf166. Interacts with FAM98B. Interacts with PLEKHM1 (via N- and C-terminus).

In terms of biological role, positively stimulates PRMT1-induced protein arginine methylation. Involved in skeletal homeostasis. Positively regulates lysosome peripheral distribution and ruffled border formation in osteoclasts. The polypeptide is Protein FAM98A (Pongo abelii (Sumatran orangutan)).